A 107-amino-acid chain; its full sequence is NADH dehydrogenase [ubiquinone] 1 beta subcomplex subunit 10-A (107 aa).

Positions 1–23 (MGRKKGLPEFEESAPDGFDPENP) are disordered.

It belongs to the complex I NDUFB10 subunit family. In terms of assembly, complex I is composed of at least 49 different subunits.

The protein localises to the mitochondrion inner membrane. Its function is as follows. Accessory subunit of the mitochondrial membrane respiratory chain NADH dehydrogenase (Complex I), that is believed not to be involved in catalysis. Complex I functions in the transfer of electrons from NADH to the respiratory chain. The immediate electron acceptor for the enzyme is believed to be ubiquinone. The polypeptide is NADH dehydrogenase [ubiquinone] 1 beta subcomplex subunit 10-A (Arabidopsis thaliana (Mouse-ear cress)).